Consider the following 694-residue polypeptide: Follicle-stimulating hormone receptor (694 aa).

Positions 1–17 (MALLLVSLLAFLGSGAG) are cleaved as a signal peptide. 2 disulfides stabilise this stretch: Cys18-Cys25 and Cys23-Cys32. In terms of domain architecture, LRRNT spans 18 to 46 (CHHWLCHCSDRVFLCQDSKVTEIPPDLPR). Residues 18–365 (CHHWLCHCSD…EDIMGYNILR (348 aa)) are Extracellular-facing. 9 LRR repeats span residues 49–72 (IELR…FKDL), 73–97 (EKIE…LPKL), 98–118 (HEIR…AFQN), 119–143 (LPNL…KIQS), 144–169 (LQKV…MGLS), 170–192 (FDSL…AFNG), 193–216 (TQLD…VFRG), 217–240 (ASGP…GLEN), and 241–259 (LKKL…PSLD). N-linked (GlcNAc...) asparagine glycans are attached at residues Asn191 and Asn199. 4 disulfides stabilise this stretch: Cys275-Cys345, Cys276-Cys292, Cys276-Cys355, and Cys292-Cys337. N-linked (GlcNAc...) asparagine glycans are attached at residues Asn293 and Asn311. Residues 366–386 (VLIWFISILAITGNITVLVIL) traverse the membrane as a helical segment. The Cytoplasmic portion of the chain corresponds to 387-397 (TTSQYKLTVPR). A helical membrane pass occupies residues 398–420 (FLMCNLAFADLCIGIYLLPIASV). Residues 421–442 (DIHTKSQYHNYAIDWQTAVGCD) are Extracellular-facing. Cys441 and Cys516 are disulfide-bonded. A helical transmembrane segment spans residues 443 to 464 (AAGFFTAFASELSVYTLTAIPL). Residues 465 to 484 (ERWHTITHAMQLERKVQLRH) lie on the Cytoplasmic side of the membrane. A helical transmembrane segment spans residues 485–507 (AASVMVMGWVFAFAAALLPIFGV). At 508–527 (SSYMKVSICLPIDIDSPLSQ) the chain is on the extracellular side. The chain crosses the membrane as a helical span at residues 528 to 549 (LYVMALLVLNVLAFVVICGCYT). Over 550–572 (HIYLTVRNPNIVSSSSDTKIAKR) the chain is Cytoplasmic. The helical transmembrane segment at 573–596 (MATLIFTDFLCMAPISLFAISASL) threads the bilayer. Residues 597–607 (KAPLITVSKAK) lie on the Extracellular side of the membrane. The helical transmembrane segment at 608-629 (ILLVLFYPINSCANPFLYAIFT) threads the bilayer. Over 630 to 694 (KNFRRDFFIL…LVPLSQSAHN (65 aa)) the chain is Cytoplasmic.

Belongs to the G-protein coupled receptor 1 family. FSH/LSH/TSH subfamily. As to quaternary structure, homotrimer. Functions as a homotrimer binding the FSH hormone heterodimer composed of CGA and FSHB. Interacts with ARRB2. Interacts with APPL2; interaction is independent of follicle stimulating hormone stimulation. Post-translationally, N-glycosylated; indirectly required for FSH-binding, possibly via a conformational change that allows high affinity binding of hormone.

The protein resides in the cell membrane. In terms of biological role, g protein-coupled receptor for follitropin, the follicle-stimulating hormone. Through cAMP production activates the downstream PI3K-AKT and ERK1/ERK2 signaling pathways. In Mesocricetus auratus (Golden hamster), this protein is Follicle-stimulating hormone receptor (FSHR).